Consider the following 147-residue polypeptide: Hemoglobin subunit beta-2 (147 aa).

The Globin domain maps to 3 to 147; the sequence is HWTAEEKATI…LVAALSHGYF (145 aa). The heme b site is built by His-64 and His-93.

This sequence belongs to the globin family. In terms of assembly, heterotetramer of two alpha chains and two beta chains. In terms of tissue distribution, red blood cells.

Its function is as follows. This is a larval (tadpole) beta-globin. The polypeptide is Hemoglobin subunit beta-2 (hbb2) (Xenopus tropicalis (Western clawed frog)).